The primary structure comprises 237 residues: Type III pantothenate kinase (237 aa).

6 to 13 (DAGNSRVK) provides a ligand contact to ATP. Residues Y86 and 93-96 (GADR) each bind substrate. Catalysis depends on D95, which acts as the Proton acceptor. T118 is a binding site for ATP. Residue T168 participates in substrate binding.

The protein belongs to the type III pantothenate kinase family. Homodimer. NH4(+) is required as a cofactor. K(+) serves as cofactor.

The protein resides in the cytoplasm. It catalyses the reaction (R)-pantothenate + ATP = (R)-4'-phosphopantothenate + ADP + H(+). It functions in the pathway cofactor biosynthesis; coenzyme A biosynthesis; CoA from (R)-pantothenate: step 1/5. Its function is as follows. Catalyzes the phosphorylation of pantothenate (Pan), the first step in CoA biosynthesis. The protein is Type III pantothenate kinase of Chromobacterium violaceum (strain ATCC 12472 / DSM 30191 / JCM 1249 / CCUG 213 / NBRC 12614 / NCIMB 9131 / NCTC 9757 / MK).